Reading from the N-terminus, the 296-residue chain is MLVALAAIGVTVLLFLIKALGSGAKKAPVTLLDPNAKYPLPLIEKQEISHDTKKFRFGLPSAEHVLGLPVGQHIYLSAKVNGSLVVRAYTPVSSDEVKGHVDLVVKVYYKNVNPKFPDGGKMSQHLDSLKIGETIDFRGPNGLLVYKGKGKFAIRPDKKAEPKIKVAKHVGMLAGGTGITPMLQLIRQITQDPNDNTKCYLIFANQTEDDILLRYELETVAKSHPEQFKLWYTLDRPPQGWKYGSGFVTADMIKEHLPPPSEDVLVLMCGPPPMIQFACQDNLTKLGYPEAGRFAY.

Residues 2–24 (LVALAAIGVTVLLFLIKALGSGA) form a helical membrane-spanning segment. Residues 35–147 (NAKYPLPLIE…RGPNGLLVYK (113 aa)) form the FAD-binding FR-type domain. Residues 127–142 (DSLK…GPNG) and 166–201 (VAKH…KCYL) contribute to the FAD site.

This sequence belongs to the flavoprotein pyridine nucleotide cytochrome reductase family. FAD serves as cofactor.

It localises to the membrane. The enzyme catalyses 2 Fe(III)-[cytochrome b5] + NADH = 2 Fe(II)-[cytochrome b5] + NAD(+) + H(+). In terms of biological role, NADH-cytochrome b5 reductases are involved in desaturation and elongation of fatty acids, cholesterol biosynthesis and drug metabolism. This chain is NADH-cytochrome b5 reductase 2 (cyb5r2), found in Xenopus laevis (African clawed frog).